Here is a 163-residue protein sequence, read N- to C-terminus: NADH-quinone oxidoreductase subunit I (163 aa).

4Fe-4S ferredoxin-type domains are found at residues 53 to 83 (LRRY…IEAG) and 94 to 123 (VRYD…EGPN). Residues Cys-63, Cys-66, Cys-69, Cys-73, Cys-103, Cys-106, Cys-109, and Cys-113 each coordinate [4Fe-4S] cluster.

It belongs to the complex I 23 kDa subunit family. NDH-1 is composed of 14 different subunits. Subunits NuoA, H, J, K, L, M, N constitute the membrane sector of the complex. Requires [4Fe-4S] cluster as cofactor.

The protein resides in the cell inner membrane. The enzyme catalyses a quinone + NADH + 5 H(+)(in) = a quinol + NAD(+) + 4 H(+)(out). In terms of biological role, NDH-1 shuttles electrons from NADH, via FMN and iron-sulfur (Fe-S) centers, to quinones in the respiratory chain. The immediate electron acceptor for the enzyme in this species is believed to be ubiquinone. Couples the redox reaction to proton translocation (for every two electrons transferred, four hydrogen ions are translocated across the cytoplasmic membrane), and thus conserves the redox energy in a proton gradient. This Brucella abortus (strain S19) protein is NADH-quinone oxidoreductase subunit I.